A 344-amino-acid chain; its full sequence is MKFLDLAKVYIRSGSGGNGCVSFRREKFIEYGGPDGGDGGKGGSVWAEAVDGLNTLIDFRYQQHFFAQNGVPGKGQQRSGKDGEDIVLRVPVGTEILDEDEETVLADLTEVGQRVLLAKGGNGGFGNLHFKSATNQAPRRANPGQAGVDRTIWLRLKLIADVGLLGLPNAGKSTFLAATSNARPKIADYPFTTLHPNLGVVGVDNVEFVIADIPGLIAGAHEGRGIGDRFLGHVERCAVLLHLVDGTSGDLVEDYHTIIGELEAYGGDLAGKPRVTVLNKIDTLDDEERAFLVEELETASGGPVMMMSGASREGVTEVLRALRARIDANRLREKPVEESQPWQP.

An Obg domain is found at 1 to 159; sequence MKFLDLAKVY…RTIWLRLKLI (159 aa). An OBG-type G domain is found at 160–327; it reads ADVGLLGLPN…VLRALRARID (168 aa). Residues 166 to 173, 191 to 195, 212 to 215, 279 to 282, and 308 to 310 contribute to the GTP site; these read GLPNAGKS, FTTLH, DIPG, NKID, and SGA. Residues Ser173 and Thr193 each contribute to the Mg(2+) site.

It belongs to the TRAFAC class OBG-HflX-like GTPase superfamily. OBG GTPase family. As to quaternary structure, monomer. Requires Mg(2+) as cofactor.

The protein resides in the cytoplasm. In terms of biological role, an essential GTPase which binds GTP, GDP and possibly (p)ppGpp with moderate affinity, with high nucleotide exchange rates and a fairly low GTP hydrolysis rate. Plays a role in control of the cell cycle, stress response, ribosome biogenesis and in those bacteria that undergo differentiation, in morphogenesis control. This Ruegeria pomeroyi (strain ATCC 700808 / DSM 15171 / DSS-3) (Silicibacter pomeroyi) protein is GTPase Obg.